Consider the following 272-residue polypeptide: Imidazole glycerol phosphate synthase subunit HisF (272 aa).

Residues aspartate 12 and aspartate 131 contribute to the active site.

This sequence belongs to the HisA/HisF family. Heterodimer of HisH and HisF.

It is found in the cytoplasm. The catalysed reaction is 5-[(5-phospho-1-deoxy-D-ribulos-1-ylimino)methylamino]-1-(5-phospho-beta-D-ribosyl)imidazole-4-carboxamide + L-glutamine = D-erythro-1-(imidazol-4-yl)glycerol 3-phosphate + 5-amino-1-(5-phospho-beta-D-ribosyl)imidazole-4-carboxamide + L-glutamate + H(+). It participates in amino-acid biosynthesis; L-histidine biosynthesis; L-histidine from 5-phospho-alpha-D-ribose 1-diphosphate: step 5/9. IGPS catalyzes the conversion of PRFAR and glutamine to IGP, AICAR and glutamate. The HisF subunit catalyzes the cyclization activity that produces IGP and AICAR from PRFAR using the ammonia provided by the HisH subunit. The polypeptide is Imidazole glycerol phosphate synthase subunit HisF (Methanopyrus kandleri (strain AV19 / DSM 6324 / JCM 9639 / NBRC 100938)).